We begin with the raw amino-acid sequence, 344 residues long: L-rhamnose-proton symporter (344 aa).

10 helical membrane passes run 4-24, 38-58, 68-88, 101-121, 137-157, 175-195, 214-234, 259-279, 290-310, and 323-343; these read AITM…CFYA, WSVG…ALLL, FSLS…IGNI, MGIG…TPII, TLLG…AGQL, LVLA…MNAA, LPSY…FCFI, VLLS…YAWG, ISWM…GLVL, and VLSL…IGMA.

This sequence belongs to the L-rhamnose transporter (TC 2.A.7.6) family.

The protein localises to the cell inner membrane. It catalyses the reaction L-rhamnopyranose(in) + H(+)(in) = L-rhamnopyranose(out) + H(+)(out). In terms of biological role, uptake of L-rhamnose across the cytoplasmic membrane with the concomitant transport of protons into the cell (symport system). In Shigella dysenteriae serotype 1 (strain Sd197), this protein is L-rhamnose-proton symporter.